A 169-amino-acid polypeptide reads, in one-letter code: Probable prefoldin subunit 3 (169 aa).

It belongs to the prefoldin subunit alpha family. As to quaternary structure, heterohexamer of two PFD-alpha type and four PFD-beta type subunits.

Its function is as follows. Binds specifically to cytosolic chaperonin (c-CPN) and transfers target proteins to it. Binds to nascent polypeptide chain and promotes folding in an environment in which there are many competing pathways for nonnative proteins. This is Probable prefoldin subunit 3 from Schizosaccharomyces pombe (strain 972 / ATCC 24843) (Fission yeast).